Reading from the N-terminus, the 346-residue chain is MTTPSGSRPSIGITALGTYVPPRVVTNKDFEAHMDTSDEWIVSRTGIRERRFAAENEFTSDLGVRAVQDLLARDPDGLRDVDVVICATATPDALFPSTAALIAGQVGLSGAGAFDLSTACSGFVYALSMAQGLILGGTARRVLVVGAETLSRLVDQHDRSTAILFGDGAGAAVVGPVPQGHGFQEFVLGADSAGGPSLYARCMADRLPGGILMGERVGMNGREVFKFAVRVLGDSGQQVLDKSGLTSADVDWVIPHQANIRIIEAANERFGVPMSKTVVNIDRYGNTSSASLPLALREAVDDGRIQDGQQLLLVAFGGGLSWGACTVKWWAGAPSLTAAQQAEVTA.

Active-site residues include cysteine 120 and histidine 256. An ACP-binding region spans residues 257 to 261 (QANIR). Residue asparagine 286 is part of the active site.

Belongs to the thiolase-like superfamily. FabH family. Homodimer.

Its subcellular location is the cytoplasm. It catalyses the reaction malonyl-[ACP] + acetyl-CoA + H(+) = 3-oxobutanoyl-[ACP] + CO2 + CoA. It participates in lipid metabolism; fatty acid biosynthesis. Catalyzes the condensation reaction of fatty acid synthesis by the addition to an acyl acceptor of two carbons from malonyl-ACP. Catalyzes the first condensation reaction which initiates fatty acid synthesis and may therefore play a role in governing the total rate of fatty acid production. Possesses both acetoacetyl-ACP synthase and acetyl transacylase activities. Its substrate specificity determines the biosynthesis of branched-chain and/or straight-chain of fatty acids. This is Beta-ketoacyl-[acyl-carrier-protein] synthase III from Deinococcus geothermalis (strain DSM 11300 / CIP 105573 / AG-3a).